We begin with the raw amino-acid sequence, 394 residues long: S-adenosylmethionine synthase (394 aa).

An ATP-binding site is contributed by His16. Mg(2+) is bound at residue Asp18. Position 44 (Glu44) interacts with K(+). L-methionine contacts are provided by Glu57 and Gln100. The flexible loop stretch occupies residues 100 to 110; sequence QSPDIAQGVDA. Residues 172-174, 239-240, Asp248, 254-255, Ala271, and Lys275 contribute to the ATP site; these read DAK, RF, and RK. Asp248 contacts L-methionine. Residue Lys279 participates in L-methionine binding.

The protein belongs to the AdoMet synthase family. As to quaternary structure, homotetramer; dimer of dimers. Mg(2+) is required as a cofactor. It depends on K(+) as a cofactor.

It localises to the cytoplasm. The enzyme catalyses L-methionine + ATP + H2O = S-adenosyl-L-methionine + phosphate + diphosphate. The protein operates within amino-acid biosynthesis; S-adenosyl-L-methionine biosynthesis; S-adenosyl-L-methionine from L-methionine: step 1/1. Functionally, catalyzes the formation of S-adenosylmethionine (AdoMet) from methionine and ATP. The overall synthetic reaction is composed of two sequential steps, AdoMet formation and the subsequent tripolyphosphate hydrolysis which occurs prior to release of AdoMet from the enzyme. The chain is S-adenosylmethionine synthase from Enterococcus faecalis (strain ATCC 700802 / V583).